Here is a 293-residue protein sequence, read N- to C-terminus: uncharacterized protein (293 aa).

Residues 1 to 58 enclose the HTH lysR-type domain; that stretch reads MQLQELHMLVVLAEELNMRKAAERLFVSQPALSQRLQTIEKAWGTKIFLRSQKGLTVT. Positions 18 to 37 form a DNA-binding region, H-T-H motif; that stretch reads MRKAAERLFVSQPALSQRLQ.

It belongs to the LysR transcriptional regulatory family.

This is an uncharacterized protein from Bacillus subtilis (strain 168).